The sequence spans 197 residues: Imidazoleglycerol-phosphate dehydratase (197 aa).

This sequence belongs to the imidazoleglycerol-phosphate dehydratase family.

The protein resides in the cytoplasm. It carries out the reaction D-erythro-1-(imidazol-4-yl)glycerol 3-phosphate = 3-(imidazol-4-yl)-2-oxopropyl phosphate + H2O. Its pathway is amino-acid biosynthesis; L-histidine biosynthesis; L-histidine from 5-phospho-alpha-D-ribose 1-diphosphate: step 6/9. This chain is Imidazoleglycerol-phosphate dehydratase, found in Marinobacter nauticus (strain ATCC 700491 / DSM 11845 / VT8) (Marinobacter aquaeolei).